A 359-amino-acid chain; its full sequence is UDP-N-acetylglucosamine--N-acetylmuramyl-(pentapeptide) pyrophosphoryl-undecaprenol N-acetylglucosamine transferase (359 aa).

UDP-N-acetyl-alpha-D-glucosamine is bound by residues 14–16 (TGG), N126, R166, S194, I248, and Q293.

This sequence belongs to the glycosyltransferase 28 family. MurG subfamily.

It localises to the cell inner membrane. It catalyses the reaction di-trans,octa-cis-undecaprenyl diphospho-N-acetyl-alpha-D-muramoyl-L-alanyl-D-glutamyl-meso-2,6-diaminopimeloyl-D-alanyl-D-alanine + UDP-N-acetyl-alpha-D-glucosamine = di-trans,octa-cis-undecaprenyl diphospho-[N-acetyl-alpha-D-glucosaminyl-(1-&gt;4)]-N-acetyl-alpha-D-muramoyl-L-alanyl-D-glutamyl-meso-2,6-diaminopimeloyl-D-alanyl-D-alanine + UDP + H(+). The protein operates within cell wall biogenesis; peptidoglycan biosynthesis. In terms of biological role, cell wall formation. Catalyzes the transfer of a GlcNAc subunit on undecaprenyl-pyrophosphoryl-MurNAc-pentapeptide (lipid intermediate I) to form undecaprenyl-pyrophosphoryl-MurNAc-(pentapeptide)GlcNAc (lipid intermediate II). The protein is UDP-N-acetylglucosamine--N-acetylmuramyl-(pentapeptide) pyrophosphoryl-undecaprenol N-acetylglucosamine transferase of Verminephrobacter eiseniae (strain EF01-2).